The chain runs to 197 residues: Proteinase inhibitor type-2 (197 aa).

Residues 1 to 24 (MAVHKVSFVAHLLVLGMFLLLVDA) form the signal peptide. Repeat copies occupy residues 24–80 (AKAC…DPKN), 81–140 (PNVC…DEPK), and 141–196 (SCTT…PQSA). Intrachain disulfides connect cysteine 27/cysteine 115, cysteine 31/cysteine 111, cysteine 39/cysteine 121, cysteine 51/cysteine 88, cysteine 54/cysteine 72, cysteine 55/cysteine 84, cysteine 61/cysteine 97, and cysteine 114/cysteine 132.

The protein belongs to the protease inhibitor I20 (potato type II proteinase inhibitor) family.

The sequence is that of Proteinase inhibitor type-2 from Nicotiana tabacum (Common tobacco).